The primary structure comprises 668 residues: L-type lectin-domain containing receptor kinase I.7 (668 aa).

Positions 1–21 (MIRGLLLGIIWMIFCVCSSFQ) are cleaved as a signal peptide. The Extracellular segment spans residues 22 to 285 (QETPFVYNNF…SSTKKKSTSP (264 aa)). The tract at residues 24–256 (TPFVYNNFGH…YQYILGWSFS (233 aa)) is legume-lectin like. Residues Asn56, Asn125, Asn167, Asn201, and Asn223 are each glycosylated (N-linked (GlcNAc...) asparagine). A helical transmembrane segment spans residues 286–306 (VLSVLLGLIAFIVLGILVVAY). The Cytoplasmic portion of the chain corresponds to 307-668 (LYRRNLYSEV…THSVLYGSGR (362 aa)). Residues 341–620 (FNRSEFLGRG…LNGNLALPEF (280 aa)) form the Protein kinase domain. Residues 347-355 (LGRGGFGEV) and Lys372 contribute to the ATP site. Asp468 functions as the Proton acceptor in the catalytic mechanism.

In the C-terminal section; belongs to the protein kinase superfamily. Ser/Thr protein kinase family. The protein in the N-terminal section; belongs to the leguminous lectin family.

The protein localises to the cell membrane. It catalyses the reaction L-seryl-[protein] + ATP = O-phospho-L-seryl-[protein] + ADP + H(+). The catalysed reaction is L-threonyl-[protein] + ATP = O-phospho-L-threonyl-[protein] + ADP + H(+). In terms of biological role, involved in resistance response to the pathogenic oomycetes Phytophthora infestans and Phytophthora capsici. This is L-type lectin-domain containing receptor kinase I.7 from Arabidopsis thaliana (Mouse-ear cress).